The sequence spans 132 residues: ATP synthase epsilon chain, chloroplastic (132 aa).

This sequence belongs to the ATPase epsilon chain family. As to quaternary structure, F-type ATPases have 2 components, CF(1) - the catalytic core - and CF(0) - the membrane proton channel. CF(1) has five subunits: alpha(3), beta(3), gamma(1), delta(1), epsilon(1). CF(0) has three main subunits: a, b and c.

Its subcellular location is the plastid. The protein resides in the chloroplast thylakoid membrane. Functionally, produces ATP from ADP in the presence of a proton gradient across the membrane. The chain is ATP synthase epsilon chain, chloroplastic from Pylaiella littoralis (Seaweed).